A 65-amino-acid chain; its full sequence is Sodium channel alpha-toxin Acra4 (65 aa).

In terms of domain architecture, LCN-type CS-alpha/beta spans 2-63 (RDGYIVDDKN…PIKDPSYKCH (62 aa)). Intrachain disulfides connect cysteine 12/cysteine 62, cysteine 16/cysteine 34, cysteine 20/cysteine 44, and cysteine 24/cysteine 46. Residue arginine 65 is a propeptide, removed by a carboxypeptidase.

Belongs to the long (4 C-C) scorpion toxin superfamily. Sodium channel inhibitor family. Alpha subfamily. As to expression, expressed by the venom gland.

The protein resides in the secreted. Its function is as follows. Alpha toxins bind voltage-independently at site-3 of sodium channels (Nav) and inhibit the inactivation of the activated channels, thereby blocking neuronal transmission. Electrophysiological studies of this were performed using sodium-channels expressed in F11 cell culture, by patch-clamp recordings. Affinity of this toxin toward sodium channels in F11 cell line is in the order of 1 uM concentration. This chain is Sodium channel alpha-toxin Acra4, found in Androctonus crassicauda (Arabian fat-tailed scorpion).